The chain runs to 337 residues: Pyruvate dehydrogenase E1 component subunit beta (337 aa).

E73 is a thiamine diphosphate binding site.

As to quaternary structure, heterodimer of an alpha and a beta chain. The cofactor is thiamine diphosphate.

The catalysed reaction is N(6)-[(R)-lipoyl]-L-lysyl-[protein] + pyruvate + H(+) = N(6)-[(R)-S(8)-acetyldihydrolipoyl]-L-lysyl-[protein] + CO2. The pyruvate dehydrogenase complex catalyzes the overall conversion of pyruvate to acetyl-CoA and CO(2). It contains multiple copies of three enzymatic components: pyruvate dehydrogenase (E1), dihydrolipoamide acetyltransferase (E2) and lipoamide dehydrogenase (E3). This is Pyruvate dehydrogenase E1 component subunit beta (pdhB) from Leifsonia xyli subsp. xyli (strain CTCB07).